The sequence spans 104 residues: N(4)-acetylcytidine amidohydrolase (104 aa).

The ASCH domain occupies 6–101 (TFFERFEHDI…EQLYMIRFKV (96 aa)). Catalysis depends on Lys-20, which acts as the Proton acceptor. Thr-23 acts as the Nucleophile in catalysis. The active-site Proton donor is the Glu-73.

It belongs to the N(4)-acetylcytidine amidohydrolase family.

It carries out the reaction N(4)-acetylcytidine + H2O = cytidine + acetate + H(+). The enzyme catalyses N(4)-acetyl-2'-deoxycytidine + H2O = 2'-deoxycytidine + acetate + H(+). It catalyses the reaction N(4)-acetylcytosine + H2O = cytosine + acetate + H(+). Functionally, catalyzes the hydrolysis of N(4)-acetylcytidine (ac4C). This Shewanella oneidensis (strain ATCC 700550 / JCM 31522 / CIP 106686 / LMG 19005 / NCIMB 14063 / MR-1) protein is N(4)-acetylcytidine amidohydrolase.